Consider the following 690-residue polypeptide: Protein-glutamine gamma-glutamyltransferase 2 (690 aa).

Ala-2 carries the N-acetylalanine modification. Intrachain disulfides connect Cys-230–Cys-370 and Cys-370–Cys-371. Catalysis depends on residues Cys-277, His-335, and Asp-358. Ca(2+) contacts are provided by Asn-398, Asp-400, Glu-436, Glu-446, and Glu-451. Residue Lys-467 is modified to N6-acetyllysine. Residue 479-486 (RIRVGQNM) coordinates GTP. A Ca(2+)-binding site is contributed by Glu-542. 583–586 (RDIY) contributes to the GTP binding site. Residue Gln-636 forms an Isoglutamyl lysine isopeptide (Gln-Lys) (interchain with K-?) linkage.

Belongs to the transglutaminase superfamily. Transglutaminase family. As to quaternary structure, monomer. Interacts with phospholipase C; promoting alpha-1 adrenergic receptor signaling. Interacts with PLCD1. Requires Ca(2+) as cofactor. In terms of processing, disulfide bond formation inactivates the calcium-dependent acyltransferase activity. Cys-370 can form disulfide bonds with both Cys-230 and Cys-371: formation of a disulfide bond between Cys-230 and Cys-370 facilitates formation of the disulfide between Cys-370 and Cys-371, which promotes inactivation of the acyltransferase activity. May also form interchain disulfids between Cys-230 and Cys-370. Ca(2+) protects against disulfide bond formation and inactivation. Auto-transglutaminated: Forms covalent cross-links mediated by transglutaminase between Gln-636 and the epsilon-amino group of a lysine residue of itself or HMGB1, forming homopolymers and heteropolymers, respectively. Post-translationally, S-nitrosylated, leading to inactivation of the acyltransferase activity.

It localises to the cytoplasm. It is found in the cytosol. Its subcellular location is the nucleus. The protein localises to the chromosome. The protein resides in the secreted. It localises to the extracellular space. It is found in the extracellular matrix. Its subcellular location is the cell membrane. The protein localises to the mitochondrion. The enzyme catalyses L-glutaminyl-[protein] + L-lysyl-[protein] = [protein]-L-lysyl-N(6)-5-L-glutamyl-[protein] + NH4(+). It catalyses the reaction L-glutaminyl-[protein] + serotonin = 5-serotonyl-L-glutamyl-[protein] + NH4(+). It carries out the reaction L-glutaminyl-[protein] + dopamine = 5-dopaminyl-L-glutamyl-[protein] + NH4(+). The catalysed reaction is L-glutaminyl-[protein] + histamine = 5-histaminyl-L-glutamyl-[protein] + NH4(+). The enzyme catalyses L-glutaminyl-[protein] + (R)-noradrenaline = 5-(R)-noradrenalinyl-L-glutamyl-[protein] + NH4(+). It catalyses the reaction L-glutaminyl-[protein] + H2O = L-glutamyl-[protein] + NH4(+). Acyltransferase activity is regulated by the binding of GTP and Ca(2+): inactivated by GTP, which stabilizes its closed structure, thereby obstructing the accessibility of substrates to the active sites. In contrast, Ca(2+) acts as a cofactor by inducing conformational change to the active open form. In absence of Ca(2+), Mg(2+) may bind Ca(2+)-binding sites, promoting GTP-binding and subsequent inhibition of the acyltransferase activity. Extracellularly reduced and activated by CLIC3. Its function is as follows. Calcium-dependent acyltransferase that catalyzes the formation of covalent bonds between peptide-bound glutamine and various primary amines, such as gamma-amino group of peptide-bound lysine, or mono- and polyamines, thereby producing cross-linked or aminated proteins, respectively. Involved in many biological processes, such as bone development, angiogenesis, wound healing, cellular differentiation, chromatin modification and apoptosis. Acts as a protein-glutamine gamma-glutamyltransferase by mediating the cross-linking of proteins, such as ACO2, HSPB6, FN1, HMGB1, RAP1GDS1, SLC25A4/ANT1, SPP1 and WDR54. Under physiological conditions, the protein cross-linking activity is inhibited by GTP; inhibition is relieved by Ca(2+) in response to various stresses. When secreted, catalyzes cross-linking of proteins of the extracellular matrix, such as FN1 and SPP1 resulting in the formation of scaffolds. Plays a key role during apoptosis, both by (1) promoting the cross-linking of cytoskeletal proteins resulting in condensation of the cytoplasm, and by (2) mediating cross-linking proteins of the extracellular matrix, resulting in the irreversible formation of scaffolds that stabilize the integrity of the dying cells before their clearance by phagocytosis, thereby preventing the leakage of harmful intracellular components. In addition to protein cross-linking, can use different monoamine substrates to catalyze a vast array of protein post-translational modifications: mediates aminylation of serotonin, dopamine, noradrenaline or histamine into glutamine residues of target proteins to generate protein serotonylation, dopaminylation, noradrenalinylation or histaminylation, respectively. Mediates protein serotonylation of small GTPases during activation and aggregation of platelets, leading to constitutive activation of these GTPases. Plays a key role in chromatin organization by mediating serotonylation and dopaminylation of histone H3. Catalyzes serotonylation of 'Gln-5' of histone H3 (H3Q5ser) during serotonergic neuron differentiation, thereby facilitating transcription. Acts as a mediator of neurotransmission-independent role of nuclear dopamine in ventral tegmental area (VTA) neurons: catalyzes dopaminylation of 'Gln-5' of histone H3 (H3Q5dop), thereby regulating relapse-related transcriptional plasticity in the reward system. Regulates vein remodeling by mediating serotonylation and subsequent inactivation of ATP2A2/SERCA2. Also acts as a protein deamidase by mediating the side chain deamidation of specific glutamine residues of proteins to glutamate. Catalyzes specific deamidation of protein gliadin, a component of wheat gluten in the diet. May also act as an isopeptidase cleaving the previously formed cross-links. Also able to participate in signaling pathways independently of its acyltransferase activity: acts as a signal transducer in alpha-1 adrenergic receptor-mediated stimulation of phospholipase C-delta (PLCD) activity and is required for coupling alpha-1 adrenergic agonists to the stimulation of phosphoinositide lipid metabolism. This chain is Protein-glutamine gamma-glutamyltransferase 2, found in Cavia cutleri (Guinea pig).